A 432-amino-acid polypeptide reads, in one-letter code: Tol-Pal system protein TolB (432 aa).

Positions 1-24 are cleaved as a signal peptide; that stretch reads MKLVTRMWSILIVFFLAVLQPAQA.

The protein belongs to the TolB family. In terms of assembly, the Tol-Pal system is composed of five core proteins: the inner membrane proteins TolA, TolQ and TolR, the periplasmic protein TolB and the outer membrane protein Pal. They form a network linking the inner and outer membranes and the peptidoglycan layer.

The protein localises to the periplasm. Its function is as follows. Part of the Tol-Pal system, which plays a role in outer membrane invagination during cell division and is important for maintaining outer membrane integrity. The sequence is that of Tol-Pal system protein TolB from Pasteurella multocida (strain Pm70).